The primary structure comprises 3357 residues: Versican core protein (3357 aa).

An N-terminal signal peptide occupies residues 1–23 (MLINMKGILWMCSTLLLTHALHQ). In terms of domain architecture, Ig-like V-type spans 24 to 146 (AKMETSPPVK…EDTQDTMSLA (123 aa)). Cystine bridges form between Cys44-Cys130, Cys172-Cys243, Cys196-Cys217, Cys270-Cys333, and Cys294-Cys315. An N-linked (GlcNAc...) asparagine glycan is attached at Asn57. Link domains follow at residues 150–245 (VVFH…YCYV) and 251–347 (DVFH…YCFK). Residues Asn330, Asn351, and Asn441 are each glycosylated (N-linked (GlcNAc...) asparagine). The interval 348–1308 (PKQNISEATT…IIEVRENKTG (961 aa)) is GAG-alpha (glucosaminoglycan attachment domain). Residues 625-634 (EPKTNGKVTE) are compositionally biased toward basic and acidic residues. A disordered region spans residues 625–646 (EPKTNGKVTEDEFGQSQPTTTF). Residue Ser660 is glycosylated (O-linked (Xyl...) (chondroitin sulfate) serine). 2 disordered regions span residues 801 to 863 (WPGD…KPLE) and 881 to 908 (TSTSIGSAEKSASGEPTTGDRFLPTTST). N-linked (GlcNAc...) asparagine glycosylation occurs at Asn807. N-linked (GlcNAc...) asparagine glycans are attached at residues Asn914 and Asn951. 2 disordered regions span residues 1010 to 1088 (SPGA…YPPG) and 1252 to 1288 (DHMTSKPPVTQPTRPSVVERKTTSKTQELSTSTPAAG). Polar residues-rich tracts occupy residues 1017–1042 (TGVSQGETQEEPQTPGSPFPTFSSTA) and 1275–1286 (SKTQELSTSTPA). N-linked (GlcNAc...) asparagine glycans are attached at residues Asn1305 and Asn1371. The interval 1309 to 3051 (RLSDMIVSGH…VEGTAVYLPG (1743 aa)) is GAG-beta. Residues 1396 to 1406 (DPEAAEARRGQ) show a composition bias toward basic and acidic residues. Disordered regions lie at residues 1396–1421 (DPEAAEARRGQYESVAPSQNFPDSSA) and 1458–1524 (TYPE…AIEQ). Polar residues-rich tracts occupy residues 1411–1421 (APSQNFPDSSA) and 1487–1498 (WSESITESSPNL). Residues Ser1517 and Ser1599 are each glycosylated (O-linked (Xyl...) (chondroitin sulfate) serine). The segment at 1664-1705 (LPSPDARPTTVWNSNSTSEWVSDKSFEGRKKKENEDEEGAVN) is disordered. Residues 1673–1683 (TVWNSNSTSEW) are compositionally biased toward polar residues. An N-linked (GlcNAc...) asparagine glycan is attached at Asn1678. Residues 1684 to 1697 (VSDKSFEGRKKKEN) are compositionally biased toward basic and acidic residues. Residues Ser1907 and Ser1931 are each glycosylated (O-linked (Xyl...) (chondroitin sulfate) serine). The interval 1926 to 1965 (VGMGGSDDERVRDTQTSSSIPTTSDNIYPVPDSKGPDSTV) is disordered. Over residues 1939 to 1951 (TQTSSSIPTTSDN) the composition is skewed to polar residues. N-linked (GlcNAc...) asparagine glycosylation is present at Asn2053. Ser2219 and Ser2226 each carry an O-linked (Xyl...) (chondroitin sulfate) serine glycan. Residue Asn2243 is glycosylated (N-linked (GlcNAc...) asparagine). Residues 2308–2322 (TLSHTGTEEPTTSTL) are compositionally biased toward polar residues. Disordered regions lie at residues 2308-2374 (TLSH…ATSP) and 2475-2494 (YPTSTLPSTEPYKSPSEGIE). Asn2361 carries an N-linked (GlcNAc...) asparagine glycan. The segment covering 2475-2486 (YPTSTLPSTEPY) has biased composition (low complexity). 2 positions are modified to phosphoserine: Ser2585 and Ser2586. N-linked (GlcNAc...) asparagine glycosylation occurs at Asn2626. O-linked (Xyl...) (chondroitin sulfate) serine glycosylation is found at Ser2696, Ser2697, and Ser2741. A disordered region spans residues 2853–2908 (LGGNVHRTEPPSMSRDPALDVSEDESKHKLLEELETSPTKPETSQDFPNKAKDHIP). Over residues 2888–2899 (TSPTKPETSQDF) the composition is skewed to polar residues. N-linked (GlcNAc...) asparagine glycosylation is present at Asn3029. The 37-residue stretch at 3051–3087 (GPDLCKTNPCLNGGTCYPTETSYVCTCAPGYSGDQCE) folds into the EGF-like 1 domain. 11 disulfide bridges follow: Cys3055–Cys3066, Cys3060–Cys3075, Cys3077–Cys3086, Cys3093–Cys3104, Cys3098–Cys3113, Cys3115–Cys3124, Cys3131–Cys3142, Cys3159–Cys3251, Cys3227–Cys3243, Cys3258–Cys3301, and Cys3287–Cys3314. Residues 3089–3125 (DFDECHSNPCRNGATCVDGFNTFRCLCLPSYVGALCE) form the EGF-like 2; calcium-binding domain. The C-type lectin domain maps to 3138 to 3252 (FQGQCYKYFA…CNYHLTYTCK (115 aa)). The 61-residue stretch at 3256 to 3316 (VACGQPPVVE…WAMPKITCMN (61 aa)) folds into the Sushi domain. N-linked (GlcNAc...) asparagine glycans are attached at residues Asn3331 and Asn3341. Residues 3331–3342 (NSSSAKDNSINT) are compositionally biased toward polar residues. Residues 3331–3357 (NSSSAKDNSINTSKHEHRWSRRQETRR) are disordered.

This sequence belongs to the aggrecan/versican proteoglycan family. As to quaternary structure, interacts with FBLN1. Phosphorylated by FAM20C in the extracellular medium. Post-translationally, proteolytically cleaved by ADAMTS5 and ADAMTS15 in the pericellular matrix surrounding myoblasts, facilitating myoblast contact and fusion which is required for skeletal muscle development and regeneration. In terms of tissue distribution, expressed in the retina (at protein level). Isoform V2: Only expressed in brain.

The protein localises to the secreted. Its subcellular location is the extracellular space. It is found in the extracellular matrix. It localises to the cell projection. The protein resides in the cilium. The protein localises to the photoreceptor outer segment. Its subcellular location is the interphotoreceptor matrix. In terms of biological role, may play a role in intercellular signaling and in connecting cells with the extracellular matrix. May take part in the regulation of cell motility, growth and differentiation. Binds hyaluronic acid. This is Versican core protein (Vcan) from Mus musculus (Mouse).